Reading from the N-terminus, the 457-residue chain is UDP-N-acetylmuramoylalanine--D-glutamate ligase (457 aa).

Residue 116–122 (GTNGKTT) participates in ATP binding.

Belongs to the MurCDEF family.

Its subcellular location is the cytoplasm. The enzyme catalyses UDP-N-acetyl-alpha-D-muramoyl-L-alanine + D-glutamate + ATP = UDP-N-acetyl-alpha-D-muramoyl-L-alanyl-D-glutamate + ADP + phosphate + H(+). Its pathway is cell wall biogenesis; peptidoglycan biosynthesis. In terms of biological role, cell wall formation. Catalyzes the addition of glutamate to the nucleotide precursor UDP-N-acetylmuramoyl-L-alanine (UMA). The sequence is that of UDP-N-acetylmuramoylalanine--D-glutamate ligase from Caldicellulosiruptor bescii (strain ATCC BAA-1888 / DSM 6725 / KCTC 15123 / Z-1320) (Anaerocellum thermophilum).